Here is a 779-residue protein sequence, read N- to C-terminus: Protein phosphatase 1 regulatory subunit 21 (779 aa).

2 coiled-coil regions span residues 2-212 (AATA…QAAL) and 556-614 (TESR…ETVQ). Disordered stretches follow at residues 85–105 (ETRG…SQEQ) and 612–637 (TVQE…QREP). Low complexity predominate over residues 96–105 (ESSSQLSQEQ). The segment covering 624–637 (EQKEETTEKSQREP) has biased composition (basic and acidic residues). A coiled-coil region spans residues 693-739 (AECRALAKRLSLAEKSKESLTEELKLASQSISRLQDELMTTKRSYED). A disordered region spans residues 760–779 (EEIDTLKMTSKGNSKKNKTR).

As to quaternary structure, component of the FERRY complex.

Its subcellular location is the early endosome. In terms of biological role, component of the FERRY complex (Five-subunit Endosomal Rab5 and RNA/ribosome intermediary). The FERRY complex directly interacts with mRNAs and RAB5A, and functions as a RAB5A effector involved in the localization and the distribution of specific mRNAs most likely by mediating their endosomal transport. The complex recruits mRNAs and ribosomes to early endosomes through direct mRNA-interaction. Putative regulator of protein phosphatase 1 (PP1) activity. May play a role in the endosomal sorting process or in endosome maturation pathway. The protein is Protein phosphatase 1 regulatory subunit 21 (PPP1R21) of Gallus gallus (Chicken).